The sequence spans 337 residues: Glyceraldehyde-3-phosphate dehydrogenase 1, cytosolic (337 aa).

Residues 13 to 14, D35, and R82 each bind NAD(+); that span reads RI. Residues 153 to 155, T184, 213 to 214, and R236 each bind D-glyceraldehyde 3-phosphate; these read SCT and TG. The Nucleophile role is filled by C154. Position 318 (N318) interacts with NAD(+).

The protein belongs to the glyceraldehyde-3-phosphate dehydrogenase family. As to quaternary structure, homotetramer. In terms of processing, phosphorylated after gibberellin treatment.

It is found in the cytoplasm. It carries out the reaction D-glyceraldehyde 3-phosphate + phosphate + NAD(+) = (2R)-3-phospho-glyceroyl phosphate + NADH + H(+). It functions in the pathway carbohydrate degradation; glycolysis; pyruvate from D-glyceraldehyde 3-phosphate: step 1/5. In terms of biological role, key enzyme in glycolysis that catalyzes the first step of the pathway by converting D-glyceraldehyde 3-phosphate (G3P) into 3-phospho-D-glyceroyl phosphate. Essential for the maintenance of cellular ATP levels and carbohydrate metabolism. This is Glyceraldehyde-3-phosphate dehydrogenase 1, cytosolic (GAPC1) from Oryza sativa subsp. japonica (Rice).